A 118-amino-acid polypeptide reads, in one-letter code: Ribosome-binding factor A (118 aa).

This sequence belongs to the RbfA family. Monomer. Binds 30S ribosomal subunits, but not 50S ribosomal subunits or 70S ribosomes.

Its subcellular location is the cytoplasm. One of several proteins that assist in the late maturation steps of the functional core of the 30S ribosomal subunit. Associates with free 30S ribosomal subunits (but not with 30S subunits that are part of 70S ribosomes or polysomes). Required for efficient processing of 16S rRNA. May interact with the 5'-terminal helix region of 16S rRNA. This Shouchella clausii (strain KSM-K16) (Alkalihalobacillus clausii) protein is Ribosome-binding factor A.